The sequence spans 130 residues: Small ribosomal subunit protein uS9 (130 aa).

Belongs to the universal ribosomal protein uS9 family.

This is Small ribosomal subunit protein uS9 from Hydrogenovibrio crunogenus (strain DSM 25203 / XCL-2) (Thiomicrospira crunogena).